Reading from the N-terminus, the 604-residue chain is MASKSSRSQEHIRNFCIIAHIDHGKSTLADRLLESTGTVDNRGKKTQMLDDLALEQQRGITIKARAVAMRYKRDGIEYELNLIDTPGHVDFQYEVSRSLACCEGALLLVDAFQGVEAQTVANAFAAMEHDLTIVPVINKIDLIHARPDEVAEEMMNSLGTDPDECKRVSAKTGEGVAALLDAIVDSVPAPTGDPKAVLQAMVFDSNYDDFRGAITYIRVMQGTVRKGQKIKFLRAGSVHDVVELGQFAPSRVPCDELVAGQVGYLICNIKSLGDVHIGDTISIAGNDPAPALPGYDRPKRMVYCGLFPSDGQDFSELRDALERLAVNDPSFEFEPETSDALGFGFRCGFLGLLHMEIVQQRLEQESDIDLVQTAPNVTYEITDKRGVTKNIHKPQDVPDPGDIEKFCQPIVRCNVIVPEEYIGPVMKLCQERRGIQKGHEVLGASRAMLTYDIPLAEVIYDLHDRIKSCTRGYGTLDYEMVGYEEADLCRLDILVNGNRVDALSVVCHRADADRRGRAVAKKLKSEIERHMFEVAVQAAIGSRVIARETVPAMRKNVTAKCYGGDITRKRKLLQKQKEGKKRMKAVGNVEISQKAFMAVLTDGE.

The 182-residue stretch at 10–191 folds into the tr-type G domain; it reads EHIRNFCIIA…AIVDSVPAPT (182 aa). GTP is bound by residues 22–27 and 138–141; these read DHGKST and NKID.

It belongs to the TRAFAC class translation factor GTPase superfamily. Classic translation factor GTPase family. LepA subfamily.

It localises to the cell inner membrane. It carries out the reaction GTP + H2O = GDP + phosphate + H(+). Functionally, required for accurate and efficient protein synthesis under certain stress conditions. May act as a fidelity factor of the translation reaction, by catalyzing a one-codon backward translocation of tRNAs on improperly translocated ribosomes. Back-translocation proceeds from a post-translocation (POST) complex to a pre-translocation (PRE) complex, thus giving elongation factor G a second chance to translocate the tRNAs correctly. Binds to ribosomes in a GTP-dependent manner. The chain is Elongation factor 4 1 from Rhodopirellula baltica (strain DSM 10527 / NCIMB 13988 / SH1).